Here is a 602-residue protein sequence, read N- to C-terminus: Elongation factor 4 (602 aa).

The 182-residue stretch at 7–188 folds into the tr-type G domain; the sequence is ENIRNFSIIA…AIIELIPPPK (182 aa). Residues 19–24 and 135–138 contribute to the GTP site; these read DHGKST and NKID.

Belongs to the TRAFAC class translation factor GTPase superfamily. Classic translation factor GTPase family. LepA subfamily.

The protein resides in the cell inner membrane. It catalyses the reaction GTP + H2O = GDP + phosphate + H(+). Functionally, required for accurate and efficient protein synthesis under certain stress conditions. May act as a fidelity factor of the translation reaction, by catalyzing a one-codon backward translocation of tRNAs on improperly translocated ribosomes. Back-translocation proceeds from a post-translocation (POST) complex to a pre-translocation (PRE) complex, thus giving elongation factor G a second chance to translocate the tRNAs correctly. Binds to ribosomes in a GTP-dependent manner. The sequence is that of Elongation factor 4 from Chlamydia caviae (strain ATCC VR-813 / DSM 19441 / 03DC25 / GPIC) (Chlamydophila caviae).